Consider the following 234-residue polypeptide: MSKKVTKRFSELLKKVDSDKIYTLDEAVSTVKTLASAKFDETVEIALKLNVDPRHADQMVRGSVVLPAGTGKTVRVAVIAKDAKADEAKAAGADIVGAEDFVDEIAKGVINFDVLIATPNLMGLVGKIGRLLGPKGLMPNPKTGTVTMDVAQAIKNAKGGQVNFRVDKQGNIHAGLGKVSFSKDQLNDNISAFIKMINKHKPAASKGRYIKSAALSLTMSPSITLEPQELMDLK.

This sequence belongs to the universal ribosomal protein uL1 family. Part of the 50S ribosomal subunit.

In terms of biological role, binds directly to 23S rRNA. The L1 stalk is quite mobile in the ribosome, and is involved in E site tRNA release. Functionally, protein L1 is also a translational repressor protein, it controls the translation of the L11 operon by binding to its mRNA. The protein is Large ribosomal subunit protein uL1 of Campylobacter fetus subsp. fetus (strain 82-40).